The primary structure comprises 538 residues: UPF0761 membrane protein PsycPRwf_0630 (538 aa).

Transmembrane regions (helical) follow at residues 43–63 (LLSI…VPAL), 100–120 (LTAI…TTIE), 143–163 (WTII…SSAV), 183–203 (WVQV…YWFI), 215–235 (IAGV…GIIM), and 247–267 (AFAA…LILL). The tract at residues 427–538 (SVFSAQDADA…IITEDDNPNK (112 aa)) is disordered. Low complexity predominate over residues 482-493 (PPDADIKAAAAK). Over residues 503–514 (KHTETAKQEHKK) the composition is skewed to basic and acidic residues.

Belongs to the UPF0761 family.

The protein localises to the cell inner membrane. This chain is UPF0761 membrane protein PsycPRwf_0630, found in Psychrobacter sp. (strain PRwf-1).